We begin with the raw amino-acid sequence, 843 residues long: Lon protease (843 aa).

A compositionally biased stretch (basic and acidic residues) spans 1-16; that stretch reads MRERKETAMSDKEKKG. Residues 1–22 form a disordered region; that stretch reads MRERKETAMSDKEKKGAGAGAQ. The Lon N-terminal domain occupies 42–236; the sequence is LPILPLRNSV…LVLELLNRKR (195 aa). 388 to 395 is a binding site for ATP; sequence GPPGVGKT. The 182-residue stretch at 627-808 folds into the Lon proteolytic domain; that stretch reads TEIAGVATGL…DEVLQAALEE (182 aa). Active-site residues include S714 and K757. Residues 805–843 are disordered; that stretch reads ALEENPVGRKPPAAPEPEGEKKPGATPTPPAKKPDEIRV.

The protein belongs to the peptidase S16 family. In terms of assembly, homohexamer. Organized in a ring with a central cavity.

The protein localises to the cytoplasm. It carries out the reaction Hydrolysis of proteins in presence of ATP.. Its function is as follows. ATP-dependent serine protease that mediates the selective degradation of mutant and abnormal proteins as well as certain short-lived regulatory proteins. Required for cellular homeostasis and for survival from DNA damage and developmental changes induced by stress. Degrades polypeptides processively to yield small peptide fragments that are 5 to 10 amino acids long. Binds to DNA in a double-stranded, site-specific manner. The protein is Lon protease of Anaeromyxobacter dehalogenans (strain 2CP-C).